We begin with the raw amino-acid sequence, 74 residues long: Salivary glue protein Sgs-7 (74 aa).

The first 23 residues, 1-23 (MKLIAVTIIACILLIGFSDLALG), serve as a signal peptide directing secretion.

In Drosophila melanogaster (Fruit fly), this protein is Salivary glue protein Sgs-7 (Sgs7).